We begin with the raw amino-acid sequence, 289 residues long: Urease accessory protein UreD (289 aa).

Belongs to the UreD family. In terms of assembly, ureD, UreF and UreG form a complex that acts as a GTP-hydrolysis-dependent molecular chaperone, activating the urease apoprotein by helping to assemble the nickel containing metallocenter of UreC. The UreE protein probably delivers the nickel.

Its subcellular location is the cytoplasm. Its function is as follows. Required for maturation of urease via the functional incorporation of the urease nickel metallocenter. This is Urease accessory protein UreD from Xanthobacter autotrophicus (strain ATCC BAA-1158 / Py2).